A 1056-amino-acid polypeptide reads, in one-letter code: Pleckstrin homology domain-containing family M member 1 (1056 aa).

The 143-residue stretch at 41–183 folds into the RUN domain; it reads TSEDGDANTM…LSFELSYKSA (143 aa). Disordered stretches follow at residues 215–245, 277–303, and 360–422; these read QRKE…RRNQ, GSKS…EDSD, and PAQA…QAHD. Phosphoserine is present on Ser219. The span at 389-404 shows a compositional bias: polar residues; it reads PVESTSGQQPSSTVSE. Ser432 and Ser435 each carry phosphoserine. A disordered region spans residues 451 to 483; sequence SREQPLESASDHPIASYRGTPGSRPGLHRHFSQ. Position 490 is a phosphoserine (Ser490). A PH 1 domain is found at 534–625; the sequence is GLMKLGTVER…WLDRVREALQ (92 aa). The short motif at 632-638 is the LIR element; that stretch reads EDEWVNV. An interaction with RAB7A region spans residues 654–1056; the sequence is CLSPSDLLSE…RKYQEQNIFA (403 aa). The region spanning 683–777 is the PH 2 domain; it reads DAIKESLLYL…WRDLVRKVLA (95 aa). The segment at 986–1040 adopts a Phorbol-ester/DAG-type zinc-finger fold; the sequence is QHVYHCDLCTQRGFICQICQHHDIIFPFEFDTTVRCAECKTVFHQSCQAVVKKGC.

As to quaternary structure, interacts (via N- and C-terminus) with RAB7A (GTP-bound form). Simultaneously interacts with RAB7A and ARL8B; bringing about clustering and fusion of late endosomes and lysosomes. Interacts (via RUN domain) with ARL8B (GTP-bound form); the interaction is required for PLEKHM1 localization to lysosomes and for ARL8B function in delivery and degradation of endocytic and autophagic cargo in lysosomes. PLEKHM1 and PLEKHM2 compete for interaction with ARL8B. Interacts with ARL8A; the interaction is weaker than with ARL8B. Interacts with VPS41, VPS11, VPS18, VPS33A and VPS39; indicative for an association with the HOPS complex; the interactions with, at least, VPS41, VPS11, VPS18 and VPS33A require ARL8B. Interacts with GABARAP, GABARAPL, GABARAPL2, MAP1LC3A, MAP1LC3B and MAP1LC3C. Interacts with PAFAH1B. Interacts (via N- and C-terminus) with NDEL1. Interacts (via C-terminus) with MAP3K7. Interacts (via N- and C-terminus) with FAM98A. Interacts (via C-terminus) with DEF8; this interaction is weak but increased in a RAB7A-dependent manner. In colon carcinoma and breast carcinoma cells, it interacts with sialyl-lex-positive protein. In terms of assembly, (Microbial infection) Interacts with Salmonella typhimurium sifA. As to expression, expressed in placenta, liver, prostate, thymus, spleen, ovary, colon, colon carcinoma and peripheral blood lymphocytes (PBL). Weakly expressed in brain, lung, kidney, and testis. No expression in heart, skeletal muscle, pancreas and small intestine. Predominantly expressed in the breast carcinoma cell line MCF-7.

It localises to the autolysosome membrane. Its subcellular location is the endosome membrane. The protein localises to the late endosome membrane. The protein resides in the lysosome membrane. Functionally, acts as a multivalent adapter protein that regulates Rab7-dependent and HOPS complex-dependent fusion events in the endolysosomal system and couples autophagic and the endocytic trafficking pathways. Acts as a dual effector of RAB7A and ARL8B that simultaneously binds these GTPases, bringing about clustering and fusion of late endosomes and lysosomes. Required for late stages of endolysosomal maturation, facilitating both endocytosis-mediated degradation of growth factor receptors and autophagosome clearance. Interaction with Arl8b is a crucial factor in the terminal maturation of autophagosomes and to mediate autophagosome-lysosome fusion. Positively regulates lysosome peripheral distribution and ruffled border formation in osteoclasts. May be involved in negative regulation of endocytic transport from early endosome to late endosome/lysosome implicating its association with Rab7. May have a role in sialyl-lex-mediated transduction of apoptotic signals. Involved in bone resorption. Its function is as follows. (Microbial infection) In case of infection contributes to Salmonella typhimurium pathogenesis by supporting the integrity of the Salmonella-containing vacuole (SCV) probably in concert with the HOPS complex and Rab7. The polypeptide is Pleckstrin homology domain-containing family M member 1 (Homo sapiens (Human)).